Consider the following 393-residue polypeptide: Prokineticin receptor 1 (393 aa).

The Extracellular portion of the chain corresponds to 1 to 62 (METTVGTLGE…TNSRTFFAAK (62 aa)). N-linked (GlcNAc...) asparagine glycosylation occurs at N11. The helical transmembrane segment at 63 to 83 (IVIGMALVGIMLVCGIGNFIF) threads the bilayer. Residues 84 to 98 (ITALARYKKLRNLTN) lie on the Cytoplasmic side of the membrane. The chain crosses the membrane as a helical span at residues 99–119 (LLIANLAISDFLVAIVCCPFE). Residues 120–145 (MDYYVVRQLSWEHGHVLCASVNYLRT) are Extracellular-facing. C137 and C217 are joined by a disulfide. The chain crosses the membrane as a helical span at residues 146 to 166 (VSLYVSTNALLAIAIDRYLAI). At 167–179 (VHPLRPRMKCQTA) the chain is on the cytoplasmic side. Residues 180–200 (AGLIFLVWSVSILIAIPAAYF) form a helical membrane-spanning segment. Over 201-232 (TTETVLVIVESQEKIFCGQIWPVDQQFYYRSY) the chain is Extracellular. A helical transmembrane segment spans residues 233–253 (FLLVFGLEFVGPVIAMTLCYA). The Cytoplasmic portion of the chain corresponds to 254–282 (RVSRELWFKAVPGFQTEQIRRRLRCRRRT). A helical membrane pass occupies residues 283–303 (VLGLVCVLSAYVLCWAPFYGF). At 304–322 (TIVRDFFPSVFVKEKHYLT) the chain is on the extracellular side. Residues 323–343 (AFYVVECIAMSNSMINTLCFV) form a helical membrane-spanning segment. Residues 344–393 (TVRNNTSKYLKRILRLQWRASPSGSKASADLDLRTTGIPATEEVDCIRLK) are Cytoplasmic-facing.

It belongs to the G-protein coupled receptor 1 family. In terms of tissue distribution, widely expressed in peripheral tissues with the highest level in the spleen and moderate levels in the adipose tissues, thymus, lung, kidney, testis, uterus and small intestine.

It localises to the cell membrane. In terms of biological role, receptor for prokineticin 1. Exclusively coupled to the G(q) subclass of heteromeric G proteins. Activation leads to mobilization of calcium, stimulation of phosphoinositide turnover and activation of p44/p42 mitogen-activated protein kinase. May play a role during early pregnancy. This Rattus norvegicus (Rat) protein is Prokineticin receptor 1 (Prokr1).